We begin with the raw amino-acid sequence, 207 residues long: Early nodulin-like protein 11 (207 aa).

A signal peptide spans 1–24 (MVSLISIVSVVFLLFTTFYHFGEA). The region spanning 25-130 (RIINVGGSLD…GEKVTVVVQS (106 aa)) is the Phytocyanin domain. The N-linked (GlcNAc...) asparagine glycan is linked to N43. C83 and C118 are oxidised to a cystine. Residues 129-179 (QSPNHPKPGPAAVTPTLPPKPSTTPAAPAPAPPTPSPKSSTSTMAPAPAPA) are disordered. Residues 144-164 (TLPPKPSTTPAAPAPAPPTPS) are compositionally biased toward pro residues. Low complexity predominate over residues 165 to 179 (PKSSTSTMAPAPAPA). The GPI-anchor amidated serine moiety is linked to residue S181. The propeptide at 182-207 (SAVGLVAGNGIFWASTLVAVIGLAFA) is removed in mature form.

Belongs to the early nodulin-like (ENODL) family. As to expression, confined to flowers and siliques.

It is found in the cell membrane. Its function is as follows. May act as a carbohydrate transporter. Required, together with ENODL11, ENODL12, ENODL13, ENODL14 and ENODL15, for male-female communication and pollen tube reception and burst at the synergid cell surface of the female gametophyte. The sequence is that of Early nodulin-like protein 11 from Arabidopsis thaliana (Mouse-ear cress).